We begin with the raw amino-acid sequence, 576 residues long: Trehalase (576 aa).

A signal peptide spans 1-20 (MTWELHLLLLLGLGLRSQEA). An N-linked (GlcNAc...) asparagine glycan is attached at Asn-75. Substrate-binding positions include Arg-165, 172–173 (WD), Asn-209, and 218–220 (RSQ). An N-linked (GlcNAc...) asparagine glycan is attached at Asn-258. Substrate is bound by residues 283 to 285 (RPE) and Gly-316. The Proton donor/acceptor role is filled by Asp-318. N-linked (GlcNAc...) asparagine glycosylation occurs at Asn-366. The active-site Proton donor/acceptor is Glu-511. Glu-526 contacts substrate. The GPI-anchor amidated serine moiety is linked to residue Ser-553. The propeptide at 554 to 576 (GTQLASLGPHCLVAALLLSLLLQ) is removed in mature form.

This sequence belongs to the glycosyl hydrolase 37 family. In terms of assembly, homodimer; disulfide-linked.

The protein resides in the cell membrane. The enzyme catalyses alpha,alpha-trehalose + H2O = alpha-D-glucose + beta-D-glucose. Intestinal trehalase is probably involved in the hydrolysis of ingested trehalose. The chain is Trehalase from Mus musculus (Mouse).